Here is a 230-residue protein sequence, read N- to C-terminus: Ion-translocating oxidoreductase complex subunit E (230 aa).

The next 5 membrane-spanning stretches (helical) occupy residues 39-59, 69-89, 93-113, 124-144, and 182-202; these read LGLGIATLLVLVGSNVTVSLV, IPVFVMIIASLVTCVQLLMNA, GLYLSLGIFIPLIVTNCIIIG, VLPAALDGFWMGLGMTSVLVV, and AFLLALLPPGAFIGVGFLIAA.

This sequence belongs to the NqrDE/RnfAE family. As to quaternary structure, the complex is composed of six subunits: RnfA, RnfB, RnfC, RnfD, RnfE and RnfG.

The protein localises to the cell inner membrane. In terms of biological role, part of a membrane-bound complex that couples electron transfer with translocation of ions across the membrane. The sequence is that of Ion-translocating oxidoreductase complex subunit E from Vibrio cholerae serotype O1 (strain ATCC 39315 / El Tor Inaba N16961).